Reading from the N-terminus, the 541-residue chain is Chaperonin GroEL (541 aa).

ATP contacts are provided by residues 30 to 33, Lys-51, 87 to 91, Gly-415, 479 to 481, and Asp-495; these read TLGP, DGTTT, and NAA.

The protein belongs to the chaperonin (HSP60) family. As to quaternary structure, forms a cylinder of 14 subunits composed of two heptameric rings stacked back-to-back. Interacts with the co-chaperonin GroES.

Its subcellular location is the cytoplasm. It catalyses the reaction ATP + H2O + a folded polypeptide = ADP + phosphate + an unfolded polypeptide.. Its function is as follows. Together with its co-chaperonin GroES, plays an essential role in assisting protein folding. The GroEL-GroES system forms a nano-cage that allows encapsulation of the non-native substrate proteins and provides a physical environment optimized to promote and accelerate protein folding. This Acinetobacter baumannii (strain SDF) protein is Chaperonin GroEL.